The chain runs to 331 residues: 6-phosphogluconolactonase (331 aa).

This sequence belongs to the cycloisomerase 2 family.

It carries out the reaction 6-phospho-D-glucono-1,5-lactone + H2O = 6-phospho-D-gluconate + H(+). Its pathway is carbohydrate degradation; pentose phosphate pathway; D-ribulose 5-phosphate from D-glucose 6-phosphate (oxidative stage): step 2/3. Catalyzes the hydrolysis of 6-phosphogluconolactone to 6-phosphogluconate. The chain is 6-phosphogluconolactonase from Salmonella choleraesuis (strain SC-B67).